Consider the following 545-residue polypeptide: Chaperonin GroEL (545 aa).

ATP contacts are provided by residues 30 to 33, Lys51, 87 to 91, Gly415, and Asp495; these read TLGP and DGTTT.

Belongs to the chaperonin (HSP60) family. As to quaternary structure, forms a cylinder of 14 subunits composed of two heptameric rings stacked back-to-back. Interacts with the co-chaperonin GroES.

The protein localises to the cytoplasm. It catalyses the reaction ATP + H2O + a folded polypeptide = ADP + phosphate + an unfolded polypeptide.. In terms of biological role, together with its co-chaperonin GroES, plays an essential role in assisting protein folding. The GroEL-GroES system forms a nano-cage that allows encapsulation of the non-native substrate proteins and provides a physical environment optimized to promote and accelerate protein folding. The sequence is that of Chaperonin GroEL from Shewanella putrefaciens (strain CN-32 / ATCC BAA-453).